Here is a 182-residue protein sequence, read N- to C-terminus: ATP-dependent protease subunit HslV (182 aa).

Threonine 12 is a catalytic residue. The Na(+) site is built by alanine 167, cysteine 170, and threonine 173.

The protein belongs to the peptidase T1B family. HslV subfamily. A double ring-shaped homohexamer of HslV is capped on each side by a ring-shaped HslU homohexamer. The assembly of the HslU/HslV complex is dependent on binding of ATP.

The protein localises to the cytoplasm. It carries out the reaction ATP-dependent cleavage of peptide bonds with broad specificity.. Its activity is regulated as follows. Allosterically activated by HslU binding. Protease subunit of a proteasome-like degradation complex believed to be a general protein degrading machinery. In Chlorobium chlorochromatii (strain CaD3), this protein is ATP-dependent protease subunit HslV.